Reading from the N-terminus, the 142-residue chain is Transcriptional regulator MraZ (142 aa).

SpoVT-AbrB domains are found at residues Ala-5–Glu-51 and Ala-77–Thr-120.

Belongs to the MraZ family. As to quaternary structure, forms oligomers.

The protein resides in the cytoplasm. The protein localises to the nucleoid. The chain is Transcriptional regulator MraZ from Acidovorax ebreus (strain TPSY) (Diaphorobacter sp. (strain TPSY)).